We begin with the raw amino-acid sequence, 336 residues long: Anthranilate phosphoribosyltransferase (336 aa).

Residues G81, 84 to 85, S89, 91 to 94, 109 to 117, and A121 each bind 5-phospho-alpha-D-ribose 1-diphosphate; these read GD, NIST, and KHGNRGLSS. Anthranilate is bound at residue G81. Residue S93 coordinates Mg(2+). N112 provides a ligand contact to anthranilate. R167 serves as a coordination point for anthranilate. 2 residues coordinate Mg(2+): D225 and E226.

This sequence belongs to the anthranilate phosphoribosyltransferase family. As to quaternary structure, homodimer. It depends on Mg(2+) as a cofactor.

The enzyme catalyses N-(5-phospho-beta-D-ribosyl)anthranilate + diphosphate = 5-phospho-alpha-D-ribose 1-diphosphate + anthranilate. The protein operates within amino-acid biosynthesis; L-tryptophan biosynthesis; L-tryptophan from chorismate: step 2/5. Functionally, catalyzes the transfer of the phosphoribosyl group of 5-phosphorylribose-1-pyrophosphate (PRPP) to anthranilate to yield N-(5'-phosphoribosyl)-anthranilate (PRA). The chain is Anthranilate phosphoribosyltransferase from Mesorhizobium japonicum (strain LMG 29417 / CECT 9101 / MAFF 303099) (Mesorhizobium loti (strain MAFF 303099)).